The chain runs to 486 residues: MRKERPGVLFNKIRSYFICPGCNCLPDWPVTLPCGGTVCRKCFRNAYSSESSGKVSPSRCCFYNHKKPHYSVETEVKDVIISKVVELIKTTEFQISQQSLVPLELKEEICHDDCLSSSPPCTSALTEITLLPPTFHNLIPSSSSYETAVAEFLHMEDLLQENVSRELECQICFGMLYDPVVSPCGHTFCGPCLMQALTQSPQCPTCRFGLPSPVVLEHAKSHSITTFLRDFYPDNWLERQKSWEEEKEQESWLPLFISMLAYPRMPTFLHIFELRYHIMIKKCLETSKRFCIAMPLRARSDGHNEHRELRNARGQRLFCSEYGTILEIIQVEPLIDGRSLVEARGSYCVRIIDFRADGLFPRVKIEKHYDTPLRATPLQFPEPEYLLMYGNLSNEELVERIDAFYMNARRTYVHWVVPLIDIKMEARQSIADLSYKITNLLPISELEKTRILQVDNPTDRLVLVLIWLTQLQESWWYRVGSACTIA.

Residues 169 to 207 (CQICFGMLYDPVVSPCGHTFCGPCLMQALTQSPQCPTCR) form an RING-type zinc finger. The Lon N-terminal domain maps to 250–472 (ESWLPLFISM…LVLIWLTQLQ (223 aa)).

This Schizosaccharomyces pombe (strain 972 / ATCC 24843) (Fission yeast) protein is LON peptidase N-terminal domain and RING finger protein C14F5.10c.